The primary structure comprises 805 residues: Transducer protein BasT (805 aa).

2 helical membrane passes run 25–45 (FNVL…YIHL) and 296–316 (NLAG…LTVG). 2 HAMP domains span residues 317 to 370 (RRTS…TAAS) and 437 to 490 (ERLE…ATLA). In terms of domain architecture, Methyl-accepting transducer spans 509–745 (SAAEIRSASD…EVVTMIDEVT (237 aa)). Positions 513-532 (IRSASDQVSESVQDISADAD) are disordered. The span at 516–526 (ASDQVSESVQD) shows a compositional bias: polar residues. 3 positions are modified to glutamate methyl ester (Glu): Glu-554, Glu-736, and Glu-763. The segment at 752–779 (ATESQQVSAAAEEQAASVSEVAGRADDL) is disordered. Positions 754 to 773 (ESQQVSAAAEEQAASVSEVA) are enriched in low complexity.

It belongs to the methyl-accepting chemotaxis (MCP) protein family. In terms of assembly, interacts with CheA, CheY, CheW1 and CheW2. In terms of processing, methylated by CheR.

The protein localises to the cell membrane. Its function is as follows. Mediates chemotaxis towards five attractant amino acids (leucine, isoleucine, valine, methionine and cysteine). Probably transduces the signal from the substrate-binding protein BasB to the histidine kinase CheA. The chain is Transducer protein BasT (basT) from Halobacterium salinarum (strain ATCC 29341 / DSM 671 / R1).